The chain runs to 99 residues: Beta-defensin 127 (99 aa).

The first 20 residues, 1-20, serve as a signal peptide directing secretion; it reads MGLFMIIAILLFQKPTVTEQ. 3 cysteine pairs are disulfide-bonded: cysteine 24/cysteine 53, cysteine 33/cysteine 47, and cysteine 37/cysteine 54. Residues 66 to 99 constitute a propeptide that is removed on maturation; the sequence is ITKPPRPKPATLALTLQDYVTIIENFPSLKTQST.

Belongs to the beta-defensin family.

The protein localises to the secreted. Its function is as follows. Has antibacterial activity. In Homo sapiens (Human), this protein is Beta-defensin 127 (DEFB127).